A 239-amino-acid chain; its full sequence is Orotidine 5'-phosphate decarboxylase (239 aa).

Substrate is bound by residues D12, K34, 61-70 (DLKFHDIPNT), T125, R188, Q197, G217, and R218. K63 functions as the Proton donor in the catalytic mechanism.

Belongs to the OMP decarboxylase family. Type 1 subfamily. Homodimer.

The enzyme catalyses orotidine 5'-phosphate + H(+) = UMP + CO2. Its pathway is pyrimidine metabolism; UMP biosynthesis via de novo pathway; UMP from orotate: step 2/2. In terms of biological role, catalyzes the decarboxylation of orotidine 5'-monophosphate (OMP) to uridine 5'-monophosphate (UMP). The protein is Orotidine 5'-phosphate decarboxylase of Syntrophomonas wolfei subsp. wolfei (strain DSM 2245B / Goettingen).